Here is a 711-residue protein sequence, read N- to C-terminus: DNA ligase (711 aa).

Residues 39-43, 88-89, and E119 each bind NAD(+); these read DAEYD and SL. K121 serves as the catalytic N6-AMP-lysine intermediate. Positions 142, 179, 295, and 319 each coordinate NAD(+). Zn(2+) contacts are provided by C416, C419, C434, and C440. Residues 630-711 form the BRCT domain; sequence ESVSSLAGRA…LRELLAGAGA (82 aa).

This sequence belongs to the NAD-dependent DNA ligase family. LigA subfamily. Mg(2+) is required as a cofactor. It depends on Mn(2+) as a cofactor.

It carries out the reaction NAD(+) + (deoxyribonucleotide)n-3'-hydroxyl + 5'-phospho-(deoxyribonucleotide)m = (deoxyribonucleotide)n+m + AMP + beta-nicotinamide D-nucleotide.. In terms of biological role, DNA ligase that catalyzes the formation of phosphodiester linkages between 5'-phosphoryl and 3'-hydroxyl groups in double-stranded DNA using NAD as a coenzyme and as the energy source for the reaction. It is essential for DNA replication and repair of damaged DNA. In Halorhodospira halophila (strain DSM 244 / SL1) (Ectothiorhodospira halophila (strain DSM 244 / SL1)), this protein is DNA ligase.